Here is a 158-residue protein sequence, read N- to C-terminus: NADH-quinone oxidoreductase subunit B 1 (158 aa).

Cysteine 37, cysteine 38, cysteine 102, and cysteine 132 together coordinate [4Fe-4S] cluster.

The protein belongs to the complex I 20 kDa subunit family. As to quaternary structure, NDH-1 is composed of 14 different subunits. Subunits NuoB, C, D, E, F, and G constitute the peripheral sector of the complex. It depends on [4Fe-4S] cluster as a cofactor.

It is found in the cell inner membrane. It carries out the reaction a quinone + NADH + 5 H(+)(in) = a quinol + NAD(+) + 4 H(+)(out). Its function is as follows. NDH-1 shuttles electrons from NADH, via FMN and iron-sulfur (Fe-S) centers, to quinones in the respiratory chain. Couples the redox reaction to proton translocation (for every two electrons transferred, four hydrogen ions are translocated across the cytoplasmic membrane), and thus conserves the redox energy in a proton gradient. In Chromobacterium violaceum (strain ATCC 12472 / DSM 30191 / JCM 1249 / CCUG 213 / NBRC 12614 / NCIMB 9131 / NCTC 9757 / MK), this protein is NADH-quinone oxidoreductase subunit B 1.